The sequence spans 225 residues: Cytidylate kinase (225 aa).

ATP is bound at residue 11–19 (GPAAAGKST).

It belongs to the cytidylate kinase family. Type 1 subfamily.

The protein localises to the cytoplasm. It catalyses the reaction CMP + ATP = CDP + ADP. It carries out the reaction dCMP + ATP = dCDP + ADP. The sequence is that of Cytidylate kinase from Bacillus anthracis (strain A0248).